A 72-amino-acid polypeptide reads, in one-letter code: Large ribosomal subunit protein bL31 (72 aa).

Residues Cys-16, Cys-18, Cys-38, and Cys-41 each contribute to the Zn(2+) site.

This sequence belongs to the bacterial ribosomal protein bL31 family. Type A subfamily. In terms of assembly, part of the 50S ribosomal subunit. It depends on Zn(2+) as a cofactor.

Functionally, binds the 23S rRNA. In Aromatoleum aromaticum (strain DSM 19018 / LMG 30748 / EbN1) (Azoarcus sp. (strain EbN1)), this protein is Large ribosomal subunit protein bL31.